The following is a 589-amino-acid chain: Type I restriction enzyme EcoAI specificity subunit (589 aa).

Belongs to the type-I restriction system S methylase family. In terms of assembly, the type I restriction/modification system is composed of three polypeptides R, M and S. The restriction enzyme has stoichiometry R(2)M(2)S(1) while the methyltransferase is M(2)S(1).

In terms of biological role, the specificity (S) subunit of a type I restriction enzyme; this subunit dictates DNA sequence specificity. The M and S subunits together form a methyltransferase (MTase) that methylates A-2 on the top strand and A-3 on the bottom strand of the sequence 5'-GAGN(7)GTCA-3'. In the presence of the R subunit the complex can also act as an endonuclease, binding to the same target sequence but cutting the DNA some distance from this site. Whether the DNA is cut or modified depends on the methylation state of the target sequence. When the target site is unmodified, the DNA is cut. When the target site is hemimethylated, the complex acts as a maintenance MTase modifying the DNA so that both strands become methylated. After locating a non-methylated recognition site, the enzyme complex serves as a molecular motor that translocates DNA in an ATP-dependent manner until a collision occurs that triggers cleavage. This chain is Type I restriction enzyme EcoAI specificity subunit, found in Escherichia coli.